The primary structure comprises 1502 residues: DNA-directed RNA polymerase subunit beta' (1502 aa).

Cys60, Cys62, Cys75, and Cys78 together coordinate Zn(2+). The disordered stretch occupies residues 265-293 (RKQRDLEDAEQLTGAERERKEYEASQERE). Residues 279–293 (AERERKEYEASQERE) are compositionally biased toward basic and acidic residues. Asp626, Asp628, and Asp630 together coordinate Mg(2+). 4 residues coordinate Zn(2+): Cys1002, Cys1075, Cys1082, and Cys1085. The disordered stretch occupies residues 1472-1502 (SDDNGDEVGKNGEFADETPFTGDSDDRDNEI).

The protein belongs to the RNA polymerase beta' chain family. As to quaternary structure, the RNAP catalytic core consists of 2 alpha, 1 beta, 1 beta' and 1 omega subunit. When a sigma factor is associated with the core the holoenzyme is formed, which can initiate transcription. Mg(2+) is required as a cofactor. Zn(2+) serves as cofactor.

The enzyme catalyses RNA(n) + a ribonucleoside 5'-triphosphate = RNA(n+1) + diphosphate. Functionally, DNA-dependent RNA polymerase catalyzes the transcription of DNA into RNA using the four ribonucleoside triphosphates as substrates. In Roseiflexus castenholzii (strain DSM 13941 / HLO8), this protein is DNA-directed RNA polymerase subunit beta'.